A 75-amino-acid chain; its full sequence is ATP synthase subunit c (75 aa).

The next 2 membrane-spanning stretches (helical) occupy residues 8-28 (FLGI…VSNI) and 54-74 (AALT…LIFV).

This sequence belongs to the ATPase C chain family. In terms of assembly, F-type ATPases have 2 components, F(1) - the catalytic core - and F(0) - the membrane proton channel. F(1) has five subunits: alpha(3), beta(3), gamma(1), delta(1), epsilon(1). F(0) has three main subunits: a(1), b(2) and c(10-14). The alpha and beta chains form an alternating ring which encloses part of the gamma chain. F(1) is attached to F(0) by a central stalk formed by the gamma and epsilon chains, while a peripheral stalk is formed by the delta and b chains.

It is found in the cell inner membrane. F(1)F(0) ATP synthase produces ATP from ADP in the presence of a proton or sodium gradient. F-type ATPases consist of two structural domains, F(1) containing the extramembraneous catalytic core and F(0) containing the membrane proton channel, linked together by a central stalk and a peripheral stalk. During catalysis, ATP synthesis in the catalytic domain of F(1) is coupled via a rotary mechanism of the central stalk subunits to proton translocation. In terms of biological role, key component of the F(0) channel; it plays a direct role in translocation across the membrane. A homomeric c-ring of between 10-14 subunits forms the central stalk rotor element with the F(1) delta and epsilon subunits. This chain is ATP synthase subunit c, found in Neorickettsia sennetsu (strain ATCC VR-367 / Miyayama) (Ehrlichia sennetsu).